Reading from the N-terminus, the 910-residue chain is DNA mismatch repair protein MutS (910 aa).

Positions 1–11 are enriched in basic and acidic residues; the sequence is MEAKVEEKEPE. A disordered region spans residues 1-21; that stretch reads MEAKVEEKEPEPVENAGPDAP. Residue 658 to 665 participates in ATP binding; it reads GPNMGGKS.

This sequence belongs to the DNA mismatch repair MutS family.

In terms of biological role, this protein is involved in the repair of mismatches in DNA. It is possible that it carries out the mismatch recognition step. This protein has a weak ATPase activity. In Brucella abortus (strain 2308), this protein is DNA mismatch repair protein MutS.